A 354-amino-acid polypeptide reads, in one-letter code: UPF0283 membrane protein Meso_1416 (354 aa).

The disordered stretch occupies residues 1-28 (MSEPRRPAAFRIEPAPSPSPEATREDVR). 2 helical membrane passes run 71–91 (LGAV…GLWA) and 105–125 (LGWL…AIVV).

Belongs to the UPF0283 family.

The protein localises to the cell inner membrane. The polypeptide is UPF0283 membrane protein Meso_1416 (Chelativorans sp. (strain BNC1)).